A 912-amino-acid chain; its full sequence is Serine/threonine-protein kinase D1 (912 aa).

A Phosphotyrosine modification is found at tyrosine 95. Residues 146-196 (PHALFVHSYRAPAFCDHCGEMLWGLVRQGLKCEGCGLNYHKRCAFKIPNNC) form a Phorbol-ester/DAG-type 1 zinc finger. A phosphoserine mark is found at serine 205, serine 208, serine 219, and serine 223. Residues 270-320 (PHTFVIHSYTRPTVCQYCKKLLKGLFRQGLQCKDCRFNCHKRCAPKVPNNC) form a Phorbol-ester/DAG-type 2 zinc finger. At serine 345 the chain carries Phosphoserine. The interval 377–402 (NDSGEMQDPDPDHEDANRTISPSTSN) is disordered. Phosphoserine; by MAPK13 occurs at positions 397 and 401. In terms of domain architecture, PH spans 422–541 (TVMKEGWMVH…WEIAIQHALM (120 aa)). Tyrosine 432 is modified (phosphotyrosine). Serine 448 is modified (phosphoserine). Residue tyrosine 463 is modified to Phosphotyrosine; by ABL. Residue serine 473 is modified to Phosphoserine. Tyrosine 502 bears the Phosphotyrosine mark. Serine 548 is modified (phosphoserine). Residues 583–839 (IFPDEVLGSG…VDKTLSHPWL (257 aa)) form the Protein kinase domain. Residues 589–597 (LGSGQFGIV) and lysine 612 contribute to the ATP site. The active-site Proton acceptor is aspartate 706. Serine 738 bears the Phosphoserine; by PKC/PRKCD mark. Phosphoserine; by autocatalysis and PKC/PRKCD is present on serine 742. Tyrosine 749 bears the Phosphotyrosine mark. Residue serine 910 is modified to Phosphoserine; by autocatalysis.

This sequence belongs to the protein kinase superfamily. CAMK Ser/Thr protein kinase family. PKD subfamily. As to quaternary structure, interacts (via N-terminus) with ADAP1/CENTA1. Interacts with MAPK13. Interacts with DAPK1 in an oxidative stress-regulated manner. Interacts with USP28; the interaction induces phosphorylation of USP28 and activated KRAS-mediated stabilization of ZNF304. Interacts with AKAP13 (via C-terminal domain). The cofactor is Mg(2+). In terms of processing, phosphorylated at Ser-397 and Ser-401 by MAPK13 during regulation of insulin secretion in pancreatic beta cells. Phosphorylated by DAPK1. Phosphorylated at Tyr-95 and by ABL at Tyr-463, which primes the kinase in response to oxidative stress, and promotes a second step activating phosphorylation at Ser-738/Ser-742 by PKRD. Phosphorylated on Ser-910 upon S.enterica infection in macrophages.

It localises to the cytoplasm. Its subcellular location is the cell membrane. The protein resides in the golgi apparatus. The protein localises to the trans-Golgi network. The enzyme catalyses L-seryl-[protein] + ATP = O-phospho-L-seryl-[protein] + ADP + H(+). It catalyses the reaction L-threonyl-[protein] + ATP = O-phospho-L-threonyl-[protein] + ADP + H(+). Activated by DAG and phorbol esters. Phorbol-ester/DAG-type domain 1 binds DAG with high affinity and appears to play the dominant role in mediating translocation to the cell membrane and trans-Golgi network. Phorbol-ester/DAG-type domain 2 binds phorbol ester with higher affinity. Autophosphorylation of Ser-742 and phosphorylation of Ser-738 by PKC relieves auto-inhibition by the PH domain. Phosphorylation on Tyr-463 by the SRC-ABL1 pathway in response to oxidative stress, is also required for activation. Activated by DAPK1 under oxidative stress. Serine/threonine-protein kinase that converts transient diacylglycerol (DAG) signals into prolonged physiological effects downstream of PKC, and is involved in the regulation of MAPK8/JNK1 and Ras signaling, Golgi membrane integrity and trafficking, cell survival through NF-kappa-B activation, cell migration, cell differentiation by mediating HDAC7 nuclear export, cell proliferation via MAPK1/3 (ERK1/2) signaling, and plays a role in cardiac hypertrophy, VEGFA-induced angiogenesis, genotoxic-induced apoptosis and flagellin-stimulated inflammatory response. Phosphorylates the epidermal growth factor receptor (EGFR) on dual threonine residues, which leads to the suppression of epidermal growth factor (EGF)-induced MAPK8/JNK1 activation and subsequent JUN phosphorylation. Phosphorylates RIN1, inducing RIN1 binding to 14-3-3 proteins YWHAB, YWHAE and YWHAZ and increased competition with RAF1 for binding to GTP-bound form of Ras proteins (NRAS, HRAS and KRAS). Acts downstream of the heterotrimeric G-protein beta/gamma-subunit complex to maintain the structural integrity of the Golgi membranes, and is required for protein transport along the secretory pathway. In the trans-Golgi network (TGN), regulates the fission of transport vesicles that are on their way to the plasma membrane. May act by activating the lipid kinase phosphatidylinositol 4-kinase beta (PI4KB) at the TGN for the local synthesis of phosphorylated inositol lipids, which induces a sequential production of DAG, phosphatidic acid (PA) and lyso-PA (LPA) that are necessary for membrane fission and generation of specific transport carriers to the cell surface. Under oxidative stress, is phosphorylated at Tyr-463 via SRC-ABL1 and contributes to cell survival by activating IKK complex and subsequent nuclear translocation and activation of NFKB1. Involved in cell migration by regulating integrin alpha-5/beta-3 recycling and promoting its recruitment in newly forming focal adhesion. In osteoblast differentiation, mediates the bone morphogenetic protein 2 (BMP2)-induced nuclear export of HDAC7, which results in the inhibition of HDAC7 transcriptional repression of RUNX2. In neurons, plays an important role in neuronal polarity by regulating the biogenesis of TGN-derived dendritic vesicles, and is involved in the maintenance of dendritic arborization and Golgi structure in hippocampal cells. May potentiate mitogenesis induced by the neuropeptide bombesin or vasopressin by mediating an increase in the duration of MAPK1/3 (ERK1/2) signaling, which leads to accumulation of immediate-early gene products including FOS that stimulate cell cycle progression. Plays an important role in the proliferative response induced by low calcium in keratinocytes, through sustained activation of MAPK1/3 (ERK1/2) pathway. Downstream of novel PKC signaling, plays a role in cardiac hypertrophy by phosphorylating HDAC5, which in turn triggers XPO1/CRM1-dependent nuclear export of HDAC5, MEF2A transcriptional activation and induction of downstream target genes that promote myocyte hypertrophy and pathological cardiac remodeling. Mediates cardiac troponin I (TNNI3) phosphorylation at the PKA sites, which results in reduced myofilament calcium sensitivity, and accelerated crossbridge cycling kinetics. The PRKD1-HDAC5 pathway is also involved in angiogenesis by mediating VEGFA-induced specific subset of gene expression, cell migration, and tube formation. In response to VEGFA, is necessary and required for HDAC7 phosphorylation which induces HDAC7 nuclear export and endothelial cell proliferation and migration. During apoptosis induced by cytarabine and other genotoxic agents, PRKD1 is cleaved by caspase-3 at Asp-378, resulting in activation of its kinase function and increased sensitivity of cells to the cytotoxic effects of genotoxic agents. In epithelial cells, is required for transducing flagellin-stimulated inflammatory responses by binding and phosphorylating TLR5, which contributes to MAPK14/p38 activation and production of inflammatory cytokines. Acts as an activator of NLRP3 inflammasome assembly by mediating phosphorylation of NLRP3. May play a role in inflammatory response by mediating activation of NF-kappa-B. May be involved in pain transmission by directly modulating TRPV1 receptor. Plays a role in activated KRAS-mediated stabilization of ZNF304 in colorectal cancer (CRC) cells. Regulates nuclear translocation of transcription factor TFEB in macrophages upon live S.enterica infection. The protein is Serine/threonine-protein kinase D1 (PRKD1) of Homo sapiens (Human).